We begin with the raw amino-acid sequence, 742 residues long: UPF0313 protein MA_4618 (742 aa).

Residues methionine 1–lysine 125 form a disordered region. The segment at methionine 1 to proline 128 is unknown. 2 stretches are compositionally biased toward basic and acidic residues: residues glutamate 17–glycine 40 and lysine 49–glycine 73. A compositionally biased stretch (basic residues) spans threonine 106–lysine 115. Residues methionine 129–glutamine 742 form a UPF0313 region. Residues alanine 438–arginine 707 enclose the Radical SAM core domain. 3 residues coordinate [4Fe-4S] cluster: cysteine 452, cysteine 456, and cysteine 459.

It in the C-terminal section; belongs to the UPF0313 family. The cofactor is [4Fe-4S] cluster.

The protein is UPF0313 protein MA_4618 of Methanosarcina acetivorans (strain ATCC 35395 / DSM 2834 / JCM 12185 / C2A).